Here is a 309-residue protein sequence, read N- to C-terminus: Malate dehydrogenase (309 aa).

NAD(+) is bound by residues 9-14 and Asp33; that span reads GAGFVG. Positions 82 and 88 each coordinate substrate. NAD(+)-binding positions include Asn95 and 118–120; that span reads VNN. Substrate-binding residues include Asn120 and Arg151. His175 (proton acceptor) is an active-site residue.

The protein belongs to the LDH/MDH superfamily. MDH type 3 family.

The enzyme catalyses (S)-malate + NAD(+) = oxaloacetate + NADH + H(+). Functionally, catalyzes the reversible oxidation of malate to oxaloacetate. This chain is Malate dehydrogenase, found in Roseiflexus sp. (strain RS-1).